A 361-amino-acid polypeptide reads, in one-letter code: Probable dual-specificity RNA methyltransferase RlmN (361 aa).

The active-site Proton acceptor is E99. The region spanning 105 to 342 (GPNRMTACVS…VTIRKSYGTP (238 aa)) is the Radical SAM core domain. An intrachain disulfide couples C112 to C347. [4Fe-4S] cluster is bound by residues C119, C123, and C126. Residues 171 to 172 (GE), S204, 227 to 229 (SLH), and N304 each bind S-adenosyl-L-methionine. Catalysis depends on C347, which acts as the S-methylcysteine intermediate.

The protein belongs to the radical SAM superfamily. RlmN family. [4Fe-4S] cluster is required as a cofactor.

Its subcellular location is the cytoplasm. The catalysed reaction is adenosine(2503) in 23S rRNA + 2 reduced [2Fe-2S]-[ferredoxin] + 2 S-adenosyl-L-methionine = 2-methyladenosine(2503) in 23S rRNA + 5'-deoxyadenosine + L-methionine + 2 oxidized [2Fe-2S]-[ferredoxin] + S-adenosyl-L-homocysteine. It carries out the reaction adenosine(37) in tRNA + 2 reduced [2Fe-2S]-[ferredoxin] + 2 S-adenosyl-L-methionine = 2-methyladenosine(37) in tRNA + 5'-deoxyadenosine + L-methionine + 2 oxidized [2Fe-2S]-[ferredoxin] + S-adenosyl-L-homocysteine. Functionally, specifically methylates position 2 of adenine 2503 in 23S rRNA and position 2 of adenine 37 in tRNAs. The sequence is that of Probable dual-specificity RNA methyltransferase RlmN from Chlorobium luteolum (strain DSM 273 / BCRC 81028 / 2530) (Pelodictyon luteolum).